Reading from the N-terminus, the 56-residue chain is Large ribosomal subunit protein bL32 (56 aa).

Residues 1 to 37 (MAVQQNKPTRSKRGMRRSHDALTAPLLSVDKTSGETH) are disordered.

Belongs to the bacterial ribosomal protein bL32 family.

The protein is Large ribosomal subunit protein bL32 of Photorhabdus laumondii subsp. laumondii (strain DSM 15139 / CIP 105565 / TT01) (Photorhabdus luminescens subsp. laumondii).